Consider the following 514-residue polypeptide: 2,3-bisphosphoglycerate-independent phosphoglycerate mutase (514 aa).

2 residues coordinate Mn(2+): Asp-14 and Ser-64. Ser-64 functions as the Phosphoserine intermediate in the catalytic mechanism. Residues His-125, 155–156, Arg-187, Arg-193, 263–266, and Lys-336 each bind substrate; these read RD and RADR. Mn(2+) contacts are provided by Asp-403, His-407, Asp-444, His-445, and His-463.

The protein belongs to the BPG-independent phosphoglycerate mutase family. As to quaternary structure, monomer. Mn(2+) is required as a cofactor.

It catalyses the reaction (2R)-2-phosphoglycerate = (2R)-3-phosphoglycerate. Its pathway is carbohydrate degradation; glycolysis; pyruvate from D-glyceraldehyde 3-phosphate: step 3/5. In terms of biological role, catalyzes the interconversion of 2-phosphoglycerate and 3-phosphoglycerate. The protein is 2,3-bisphosphoglycerate-independent phosphoglycerate mutase of Shewanella sediminis (strain HAW-EB3).